The primary structure comprises 417 residues: MEVIVIGSGVIGLTSAWYLAKEGHTVTVIDRQDSSGKETSFANAGQISYGYSSPWAAPGIPLKAMKWLTQEHAPLKVKPSLSPELVAWATKMLANCNEAKYAMNKSRMLRVANFSRECLTHLRTSEDLAYEGRQKGTLQVFRSEKQLDAIQQDMKLLTESGIEHSLFDVDQCLSVESGLADVKDKLVGGLYLPHDETGDCHQFCLTLTEKAKQLGVRFVFDTEVVSLNHQNRAIETITTTQGEFKADAYVVASGSYSRELLKQVDLSIPVYPVKGYSLTLPIVNVDKSPTSTVMDETYKVAMTRFDDRIRIAGTAELAGFDYLIPEKRKATIDMVIKDLFPQAGDFSKAEYWTGLRPMTPDGTPIIGKTPIKNLFTNTGHGTLGWTMACGSGKILASVVSGSASDIKSDDLSIHRYL.

3–17 (VIVIGSGVIGLTSAW) contacts FAD.

The protein belongs to the DadA oxidoreductase family. The cofactor is FAD.

The enzyme catalyses a D-alpha-amino acid + A + H2O = a 2-oxocarboxylate + AH2 + NH4(+). It participates in amino-acid degradation; D-alanine degradation; NH(3) and pyruvate from D-alanine: step 1/1. Oxidative deamination of D-amino acids. The sequence is that of D-amino acid dehydrogenase from Vibrio atlanticus (strain LGP32) (Vibrio splendidus (strain Mel32)).